Here is a 406-residue protein sequence, read N- to C-terminus: DAZ-associated protein 1 (406 aa).

Met1 is subject to N-acetylmethionine. RRM domains are found at residues 10–97 (GKLF…RTRP) and 113–190 (NKIF…RAEP). The tract at residues 74–117 (TLDGRNIDPKPCTPRGMQPERTRPKEGWQKGPRSDSSKSNKIFV) is disordered. The segment covering 91–111 (QPERTRPKEGWQKGPRSDSSK) has biased composition (basic and acidic residues). The residue at position 150 (Lys150) is an N6-acetyllysine. The disordered stretch occupies residues 186 to 406 (KRAEPRDSKN…NVQGFHPYRR (221 aa)). The span at 195-207 (NQAPGQPGASQWG) shows a compositional bias: polar residues. Positions 247-262 (GPPPAGRGAPPPPPPF) are enriched in pro residues. Arg253 bears the Omega-N-methylarginine mark. Residues 280–294 (FPQGYGAPPQFSFGY) are compositionally biased toward low complexity. Positions 295 to 315 (GPPPPPPDQFAPPGVPPPPAT) are enriched in pro residues. Low complexity predominate over residues 363–378 (SDPSQQPPSYGGPSVP). Gly residues predominate over residues 379 to 392 (GSGGPPAGGSGFGR).

In terms of assembly, interacts with DAZ and DAZL. In terms of processing, acetylation at Lys-150 is predominantly observed in the nuclear fraction, and may regulate nucleocytoplasmic transport. Mainly expressed in testis. Expressed at much lower level in liver, heart and brain. Also expressed in ovary. Expressed throughout testes development, in both the prenatal and postnatal periods.

Its subcellular location is the cytoplasm. The protein localises to the nucleus. Its function is as follows. RNA-binding protein, which may be required during spermatogenesis. The sequence is that of DAZ-associated protein 1 (Dazap1) from Mus musculus (Mouse).